Here is a 265-residue protein sequence, read N- to C-terminus: Mlc titration factor A (265 aa).

Zn(2+) is bound by residues His111, His148, His152, and Glu211.

The protein belongs to the MtfA family. As to quaternary structure, interacts with Mlc. It depends on Zn(2+) as a cofactor.

The protein resides in the cytoplasm. In terms of biological role, involved in the modulation of the activity of the glucose-phosphotransferase system (glucose-PTS). Interacts with the transcriptional repressor Mlc, preventing its interaction with DNA and leading to the modulation of expression of genes regulated by Mlc, including ptsG, which encodes the PTS system glucose-specific EIICB component. Functionally, shows zinc-dependent metallopeptidase activity. This Escherichia fergusonii (strain ATCC 35469 / DSM 13698 / CCUG 18766 / IAM 14443 / JCM 21226 / LMG 7866 / NBRC 102419 / NCTC 12128 / CDC 0568-73) protein is Mlc titration factor A.